Consider the following 35-residue polypeptide: Turgencin-B (35 aa).

2 positions are modified to methionine sulfoxide: methionine 5 and methionine 9. Disulfide bonds link cysteine 7/cysteine 31, cysteine 11/cysteine 27, and cysteine 16/cysteine 24. The residue at position 35 (glycine 35) is a Glycine amide.

Oxidation likely reduces antimicrobial activity against Gram-positive bacteria and Gram-negative bacteria.

It localises to the secreted. Functionally, has antimicrobial activity against Gram-positive bacteria (C.glutamicum ATCC 13032 (MIC=1.6 uM) and B.subtilis ATCC 23857 (MIC=1.6 uM)) and Gram-negative bacteria (E.coli ATCC 25922 (MIC=12.5 uM) and P.aeruginosa ATCC 27853 (MIC=25.0 uM)). Displays very low activity against the Gram-positive bacteria S.aureus ATCC 9144 (MIC&gt;100 uM). This is Turgencin-B from Synoicum turgens (Colonial ascidian).